The sequence spans 143 residues: Transcriptional regulator MraZ (143 aa).

2 SpoVT-AbrB domains span residues 5-47 (EFRH…PMKE) and 76-119 (ATEC…DEAR).

Belongs to the MraZ family. In terms of assembly, forms oligomers.

The protein localises to the cytoplasm. The protein resides in the nucleoid. This chain is Transcriptional regulator MraZ, found in Enterococcus hirae.